The following is an 87-amino-acid chain: Class II metallothionein-like protein 1A (87 aa).

This sequence belongs to the metallothionein superfamily. Type 15 family. Expressed in developing seeds.

Metallothioneins have a high content of cysteine residues that bind various heavy metals. The protein is Class II metallothionein-like protein 1A (MT21A) of Oryza sativa subsp. japonica (Rice).